Reading from the N-terminus, the 596-residue chain is Neuroepithelial cell-transforming gene 1 protein (596 aa).

Position 1 is an N-acetylmethionine (Met-1). Residues 1–44 (MEPELAAQKQPRPRRRSRRASGLSTEGATGPSADTSGSELDGRC) form a disordered region. Positions 1 to 74 (MEPELAAQKQ…LKRKRREKDD (74 aa)) are necessary for nuclear localization. Residues 12-19 (RPRRRSRR) carry the Nuclear localization signal motif. A phosphoserine mark is found at Ser-21 and Ser-32. Over residues 22 to 38 (GLSTEGATGPSADTSGS) the composition is skewed to polar residues. The Nuclear localization signal signature appears at 66–72 (KRKRREK). Phosphoserine is present on residues Ser-100, Ser-106, and Ser-122. The tract at residues 127-146 (GDHRSPASAQKFSSRSTVPT) is disordered. Residues 133 to 145 (ASAQKFSSRSTVP) are compositionally biased toward polar residues. The region spanning 174-356 (RRQEAIYEMS…QGVLSDINLK (183 aa)) is the DH domain. The 116-residue stretch at 386 to 501 (VLLCHGELRS…WFNCIRAAIA (116 aa)) folds into the PH domain. Ser-508 carries the phosphoserine modification. The segment at 562–596 (MAEDSKSLKTHQTQPGIRRARDKALSGGKRKETLV) is disordered.

Interacts with RHOA in its GTP- and GDP-bound states, and with CDC42 in its GTP-bound state. Interacts with the PDZ 1 domain of BAIAP1. In terms of tissue distribution, widely expressed.

It localises to the cytoplasm. The protein resides in the nucleus. In terms of biological role, acts as a guanine nucleotide exchange factor (GEF) for RhoA GTPase. May be involved in activation of the SAPK/JNK pathway Stimulates genotoxic stress-induced RHOB activity in breast cancer cells leading to their cell death. The chain is Neuroepithelial cell-transforming gene 1 protein (NET1) from Homo sapiens (Human).